The chain runs to 450 residues: Bifunctional protein GlmU (450 aa).

Residues 1–229 (MRRHAIILAA…VEEIMGVNDR (229 aa)) form a pyrophosphorylase region. Residues 8-11 (LAAG), K22, Q72, and 77-78 (GT) each bind UDP-N-acetyl-alpha-D-glucosamine. D102 lines the Mg(2+) pocket. UDP-N-acetyl-alpha-D-glucosamine contacts are provided by G139, E154, and N227. A Mg(2+)-binding site is contributed by N227. Positions 230 to 250 (VMLSQAENAMQRRTNHYHMLN) are linker. An N-acetyltransferase region spans residues 251–450 (GVTIIDPDST…RQTTKEGYRK (200 aa)). The UDP-N-acetyl-alpha-D-glucosamine site is built by R332 and K350. Catalysis depends on H362, which acts as the Proton acceptor. The UDP-N-acetyl-alpha-D-glucosamine site is built by Y365 and N376. Acetyl-CoA-binding positions include 385-386 (NY), A422, and R439.

It in the N-terminal section; belongs to the N-acetylglucosamine-1-phosphate uridyltransferase family. In the C-terminal section; belongs to the transferase hexapeptide repeat family. Homotrimer. Mg(2+) serves as cofactor.

It is found in the cytoplasm. It catalyses the reaction alpha-D-glucosamine 1-phosphate + acetyl-CoA = N-acetyl-alpha-D-glucosamine 1-phosphate + CoA + H(+). The catalysed reaction is N-acetyl-alpha-D-glucosamine 1-phosphate + UTP + H(+) = UDP-N-acetyl-alpha-D-glucosamine + diphosphate. Its pathway is nucleotide-sugar biosynthesis; UDP-N-acetyl-alpha-D-glucosamine biosynthesis; N-acetyl-alpha-D-glucosamine 1-phosphate from alpha-D-glucosamine 6-phosphate (route II): step 2/2. It participates in nucleotide-sugar biosynthesis; UDP-N-acetyl-alpha-D-glucosamine biosynthesis; UDP-N-acetyl-alpha-D-glucosamine from N-acetyl-alpha-D-glucosamine 1-phosphate: step 1/1. It functions in the pathway bacterial outer membrane biogenesis; LPS lipid A biosynthesis. Functionally, catalyzes the last two sequential reactions in the de novo biosynthetic pathway for UDP-N-acetylglucosamine (UDP-GlcNAc). The C-terminal domain catalyzes the transfer of acetyl group from acetyl coenzyme A to glucosamine-1-phosphate (GlcN-1-P) to produce N-acetylglucosamine-1-phosphate (GlcNAc-1-P), which is converted into UDP-GlcNAc by the transfer of uridine 5-monophosphate (from uridine 5-triphosphate), a reaction catalyzed by the N-terminal domain. This Staphylococcus aureus (strain MRSA252) protein is Bifunctional protein GlmU.